The sequence spans 129 residues: MWKDFKEFAMKGNIIDLAVAVVIGGAFGKIVTSLVENIIMPLVGVLTGGIDLTASFVYGSGDAQIKLGVFLQSIIDFLIIAFAIFMALRIMTKLTNKKEEAVVEEPTPELDAKEELLKEIRDLLKKEQA.

The next 3 helical transmembrane spans lie at Ile14–Leu34, Ile38–Tyr58, and Leu67–Ala87.

This sequence belongs to the MscL family. Homopentamer.

Its subcellular location is the cell membrane. Its function is as follows. Channel that opens in response to stretch forces in the membrane lipid bilayer. May participate in the regulation of osmotic pressure changes within the cell. The protein is Large-conductance mechanosensitive channel of Lysinibacillus sphaericus (strain C3-41).